We begin with the raw amino-acid sequence, 193 residues long: Acyl carrier protein phosphodiesterase (193 aa).

This sequence belongs to the AcpH family.

The catalysed reaction is holo-[ACP] + H2O = apo-[ACP] + (R)-4'-phosphopantetheine + H(+). Converts holo-ACP to apo-ACP by hydrolytic cleavage of the phosphopantetheine prosthetic group from ACP. The sequence is that of Acyl carrier protein phosphodiesterase from Escherichia coli O127:H6 (strain E2348/69 / EPEC).